The following is a 181-amino-acid chain: MLQAMDQGHLLVNNVDKYVRAGRGVMVYIAFLSDRDSAPITDEALRHAVGVLLHTKIFTHFSPEKMINQPQSLEECPEMDILIVPQASLGGKVKGRSVQFHQLVAKDVGAALYDRFCHFVRVARGVDESRVDANGAPRSEGDAPKAEGWIKYNSRVISGTFGNRQGLRFESEGPFTHMFDI.

This sequence belongs to the DTD family. Highly divergent. As to quaternary structure, homodimer.

The protein localises to the cytoplasm. In terms of biological role, may hydrolyze D-tyrosyl-tRNA(Tyr) into D-tyrosine and free tRNA(Tyr). Could be a defense mechanism against a harmful effect of D-tyrosine. The chain is Putative D-tyrosyl-tRNA(Tyr) deacylase 2 from Leishmania major.